The sequence spans 409 residues: Galactosylgalactosylxylosylprotein 3-beta-glucuronosyltransferase S (409 aa).

The disordered stretch occupies residues 1–45 (MSSARLLESQTSDEDNEDIERRPHQSHSRSCSNNTTPTHPPHPMV). Topologically, residues 1–53 (MSSARLLESQTSDEDNEDIERRPHQSHSRSCSNNTTPTHPPHPMVRKGGVARR) are cytoplasmic. Ser-9 is modified (phosphoserine). Residue Thr-11 is modified to Phosphothreonine. 2 positions are modified to phosphoserine: Ser-12 and Ser-32. The chain crosses the membrane as a helical; Signal-anchor for type II membrane protein span at residues 54–73 (ICLIGGALFLLLVALCYLTL). At 74-409 (SGDTRLGGSE…RENPHSKILS (336 aa)) the chain is on the lumenal side. N-linked (GlcNAc...) asparagine glycans are attached at residues Asn-102 and Asn-223. Asp-235 contributes to the Mn(2+) binding site. Glu-318 functions as the Proton acceptor in the catalytic mechanism. A glycan (N-linked (GlcNAc...) asparagine) is linked at Asn-338. Positions 389–409 (EGRNALISKNGRENPHSKILS) are disordered. The segment covering 398 to 409 (NGRENPHSKILS) has biased composition (basic and acidic residues).

This sequence belongs to the glycosyltransferase 43 family. Mn(2+) is required as a cofactor.

The protein localises to the golgi apparatus membrane. The catalysed reaction is 3-O-(beta-D-galactosyl-(1-&gt;3)-beta-D-galactosyl-(1-&gt;4)-beta-D-xylosyl)-L-seryl-[protein] + UDP-alpha-D-glucuronate = 3-O-(beta-D-GlcA-(1-&gt;3)-beta-D-Gal-(1-&gt;3)-beta-D-Gal-(1-&gt;4)-beta-D-Xyl)-L-seryl-[protein] + UDP + H(+). It functions in the pathway protein modification; protein glycosylation. In terms of biological role, involved in the biosynthesis of L2/HNK-1 carbohydrate epitope on both glycolipids and glycoproteins. Enzyme has a broad specificity. This chain is Galactosylgalactosylxylosylprotein 3-beta-glucuronosyltransferase S (GlcAT-S), found in Drosophila melanogaster (Fruit fly).